The following is a 419-amino-acid chain: UDP-arabinose 4-epimerase 1 (419 aa).

A disordered region spans residues 1–21; the sequence is MFSFGRARSQGRQNRSMSLGG. Residues 1–32 are Cytoplasmic-facing; sequence MFSFGRARSQGRQNRSMSLGGLDYADPKKKNN. Residues 33-51 form a helical; Signal-anchor for type II membrane protein membrane-spanning segment; the sequence is YLGKILLTASLTALCIFML. Residues 52 to 419 are Lumenal-facing; it reads KQSPTFNTPS…GLTTSSVSVY (368 aa). An NAD(+)-binding site is contributed by 72-103; that stretch reads HVLVTGGAGYIGSHAALRLLKESYRVTIVDNL. The Proton acceptor role is filled by tyrosine 220.

Belongs to the NAD(P)-dependent epimerase/dehydratase family. The cofactor is NAD(+). In terms of tissue distribution, high expression in roots. Also found in leaves, stems, flowers, and siliques.

Its subcellular location is the golgi apparatus. The protein resides in the golgi stack membrane. The catalysed reaction is UDP-beta-L-arabinopyranose = UDP-alpha-D-xylose. It functions in the pathway nucleotide-sugar biosynthesis; UDP-L-arabinose biosynthesis; UDP-L-arabinose from UDP-alpha-D-xylose: step 1/1. It participates in cell wall biogenesis; cell wall polysaccharide biosynthesis. Acts as a UDP-D-xylose 4-epimerase but lacks both UDP-D-glucose and UDP-D-glucuronic acid 4-epimerase activities in vitro. The polypeptide is UDP-arabinose 4-epimerase 1 (Arabidopsis thaliana (Mouse-ear cress)).